The chain runs to 259 residues: Phosphate import ATP-binding protein PstB 1 (259 aa).

Residues 7-254 enclose the ABC transporter domain; the sequence is VKPEDVYQIN…PDDHRTKDYI (248 aa). 45 to 52 serves as a coordination point for ATP; it reads GPSGCGKS.

This sequence belongs to the ABC transporter superfamily. Phosphate importer (TC 3.A.1.7) family. As to quaternary structure, the complex is composed of two ATP-binding proteins (PstB), two transmembrane proteins (PstC and PstA) and a solute-binding protein (PstS).

Its subcellular location is the cell membrane. It carries out the reaction phosphate(out) + ATP + H2O = ADP + 2 phosphate(in) + H(+). Its function is as follows. Part of the ABC transporter complex PstSACB involved in phosphate import. Responsible for energy coupling to the transport system. The polypeptide is Phosphate import ATP-binding protein PstB 1 (Bacillus licheniformis (strain ATCC 14580 / DSM 13 / JCM 2505 / CCUG 7422 / NBRC 12200 / NCIMB 9375 / NCTC 10341 / NRRL NRS-1264 / Gibson 46)).